We begin with the raw amino-acid sequence, 148 residues long: Snaclec crotocetin (148 aa).

The N-terminal stretch at 1 to 23 (MGRLVFVSFGLLVVFLSLTGTGA) is a signal peptide. 3 disulfide bridges follow: Cys27-Cys38, Cys55-Cys144, and Cys121-Cys136. A C-type lectin domain is found at 34-145 (YEGHCYKVFK…CSKTHKVVCK (112 aa)).

The protein belongs to the snaclec family. As to quaternary structure, heterodimer; disulfide-linked. Expressed by the venom gland.

Its subcellular location is the secreted. Its function is as follows. Interferes with one step of hemostasis (modulation of platelet aggregation, or coagulation cascade, for example). In Crotalus durissus terrificus (South American rattlesnake), this protein is Snaclec crotocetin.